The primary structure comprises 123 residues: Large ribosomal subunit protein eL8 (123 aa).

Belongs to the eukaryotic ribosomal protein eL8 family. Part of the 50S ribosomal subunit. Probably part of the RNase P complex.

Its subcellular location is the cytoplasm. Functionally, multifunctional RNA-binding protein that recognizes the K-turn motif in ribosomal RNA, the RNA component of RNase P, box H/ACA, box C/D and box C'/D' sRNAs. The chain is Large ribosomal subunit protein eL8 from Methanosphaera stadtmanae (strain ATCC 43021 / DSM 3091 / JCM 11832 / MCB-3).